Reading from the N-terminus, the 245-residue chain is Transmembrane protein 69 (245 aa).

A run of 5 helical transmembrane segments spans residues 97 to 117 (ALYITLAGLIPFTAPPLLMVI), 122 to 142 (IPVLAFTQMAYGAGFLAFLGG), 159 to 179 (YINLASSMSPILFSWAAILFS), 185 to 205 (AIVTLIIGLGIALHNELFLLP), and 216 to 236 (IVSTLVAFISFVVTLILENIY).

It localises to the membrane. In Mus musculus (Mouse), this protein is Transmembrane protein 69 (Tmem69).